The primary structure comprises 298 residues: (DL)-glycerol-3-phosphatase 1, mitochondrial (298 aa).

Residues methionine 1 to phenylalanine 46 constitute a mitochondrion transit peptide. The active-site Nucleophile is the aspartate 77. Positions 77, 79, and 242 each coordinate Mg(2+). Aspartate 79 (proton donor) is an active-site residue.

The protein belongs to the HAD-like hydrolase superfamily. DOG/GPP family. It depends on Mg(2+) as a cofactor. In terms of tissue distribution, ubiquitous with highest expression in siliques. Mainly restricted to the meristem of immature flower and vascular elements of the root, shoot, leave, siliqua and developing embryo (at the protein level).

The protein resides in the mitochondrion. It carries out the reaction sn-glycerol 1-phosphate + H2O = glycerol + phosphate. The enzyme catalyses sn-glycerol 3-phosphate + H2O = glycerol + phosphate. It catalyses the reaction 5-amino-6-(5-phospho-D-ribitylamino)uracil + H2O = 5-amino-6-(D-ribitylamino)uracil + phosphate. Functionally, acts as a glycerol-3-phosphatase with higher stereospecificity for L-glycerol-3-phosphate than DL-glycerol-3-phosphate. Can also dephosphorylate in vitro 5-amino-6-(5-phospho-D-ribitylamino)uracil, also known as ARPP. The chain is (DL)-glycerol-3-phosphatase 1, mitochondrial from Arabidopsis thaliana (Mouse-ear cress).